A 283-amino-acid chain; its full sequence is Protease HtpX homolog (283 aa).

The next 2 membrane-spanning stretches (helical) occupy residues 7-27 (TAVL…VLGG) and 29-49 (QGMA…YWFS). His131 is a Zn(2+) binding site. Residue Glu132 is part of the active site. His135 lines the Zn(2+) pocket. 2 helical membrane passes run 146-166 (ISAT…FFGG) and 177-197 (IAGI…QMAI). Glu202 serves as a coordination point for Zn(2+).

It belongs to the peptidase M48B family. Requires Zn(2+) as cofactor.

The protein localises to the cell inner membrane. The sequence is that of Protease HtpX homolog from Methylibium petroleiphilum (strain ATCC BAA-1232 / LMG 22953 / PM1).